A 663-amino-acid chain; its full sequence is MNKTTSQEILKTNNCLEWLFEKIFKQLVPNKQELYDLPFSEIYSRTFCNSQIHQLIAESLKSTVIEIETYLTDKKFIEKFLFVSVRREYKFRIKKLHVQIMLKEYDKIEFLINSGYKVDFDSLKLACLNGSLDILNLLLKFYQKKLSSELLMYCSEFSHYDIYQLLTTKYNLYPNLSVFYRAVLSDSIEIVEDVSSNISANQQVMENAFKTNHTDIINLLLIRAKKDGTHIDRNLVVYPIMNCNFELLTILSNMNLIDWHVELYYSALLSGSMEMITYLEDKIDKINPDFHKKKILDSSHQSSGKNSLLLEDIIYEIDGKKYFSHTMNYAIQSGSVNVVDYIWSRGYGITVSNFITAIKQGSVEILERLCKWYHLKLPIYLIHYFSTKSYVTNKIAKAKVLIENKLLMINEPVQECIELYKKEETHIKLIEQPTQIVSDSKYDPDYLMQYSMFFIPMKGFKLNHRLITQIRINLQLNYMDSLVELYTRDRNYADKMILLNNLFLFGTIDQIKILYPLLKTKYCPDKPILMEIICKCEITKLCYLKNNRLLDNDVVQSLIPLVIMLENPLINALFSKLTTVNLIDKYIVLSNNVTLIRKWLNESPVIDKNQIKSLFLLDDTKITDSILSKYSVTICKHKEEFLDWCQEEDLLDTRQKIEKKYLK.

5 ANK repeats span residues 91–118, 119–148, 200–229, 258–288, and 322–351; these read FRIK…GYKV, DFDS…KLSS, ANQQ…KDGT, DWHV…KINP, and YFSH…GITV.

This is Putative ankyrin repeat protein R219 from Acanthamoeba polyphaga mimivirus (APMV).